We begin with the raw amino-acid sequence, 399 residues long: Succinate--CoA ligase [ADP-forming] subunit beta (399 aa).

One can recognise an ATP-grasp domain in the interval 9 to 254; that stretch reads KAVLAEFGAP…ESEEDPKEIE (246 aa). ATP contacts are provided by residues Lys-46, 53–55, Glu-109, Ala-112, and Glu-117; that span reads GRG. Mg(2+) contacts are provided by Asn-209 and Asp-223. Substrate-binding positions include Asn-274 and 331–333; that span reads GIM.

The protein belongs to the succinate/malate CoA ligase beta subunit family. As to quaternary structure, heterotetramer of two alpha and two beta subunits. It depends on Mg(2+) as a cofactor.

It catalyses the reaction succinate + ATP + CoA = succinyl-CoA + ADP + phosphate. It carries out the reaction GTP + succinate + CoA = succinyl-CoA + GDP + phosphate. The protein operates within carbohydrate metabolism; tricarboxylic acid cycle; succinate from succinyl-CoA (ligase route): step 1/1. Succinyl-CoA synthetase functions in the citric acid cycle (TCA), coupling the hydrolysis of succinyl-CoA to the synthesis of either ATP or GTP and thus represents the only step of substrate-level phosphorylation in the TCA. The beta subunit provides nucleotide specificity of the enzyme and binds the substrate succinate, while the binding sites for coenzyme A and phosphate are found in the alpha subunit. In Caulobacter sp. (strain K31), this protein is Succinate--CoA ligase [ADP-forming] subunit beta.